Reading from the N-terminus, the 98-residue chain is NADH-ubiquinone oxidoreductase chain 4L (98 aa).

Transmembrane regions (helical) follow at residues 1 to 21 (MSVV…GLLV), 30 to 50 (LLCL…TVLT), and 61 to 81 (IILL…LVMI).

The protein belongs to the complex I subunit 4L family. As to quaternary structure, core subunit of respiratory chain NADH dehydrogenase (Complex I) which is composed of 45 different subunits.

Its subcellular location is the mitochondrion inner membrane. It catalyses the reaction a ubiquinone + NADH + 5 H(+)(in) = a ubiquinol + NAD(+) + 4 H(+)(out). In terms of biological role, core subunit of the mitochondrial membrane respiratory chain NADH dehydrogenase (Complex I) which catalyzes electron transfer from NADH through the respiratory chain, using ubiquinone as an electron acceptor. Part of the enzyme membrane arm which is embedded in the lipid bilayer and involved in proton translocation. This is NADH-ubiquinone oxidoreductase chain 4L (MT-ND4L) from Lontra canadensis (North American river otter).